The sequence spans 64 residues: Basic secretory protease (64 aa).

A divalent metal cation serves as cofactor. Post-translationally, glycosylated.

With respect to regulation, inhibited by EDTA. In terms of biological role, metalloprotease, digests gelatin and azocasein (in vitro). In Boswellia serrata (Indian frankincense), this protein is Basic secretory protease.